A 319-amino-acid polypeptide reads, in one-letter code: L-lactate dehydrogenase (319 aa).

Residues valine 11, aspartate 32, arginine 37, tyrosine 62, and 76–77 contribute to the NAD(+) site; that span reads GV. Substrate contacts are provided by residues glutamine 79, arginine 85, and 117–120; that span reads NPVD. NAD(+)-binding positions include 115 to 117 and serine 140; that span reads VTN. Position 145–148 (145–148) interacts with substrate; that stretch reads DTAR. Residues arginine 150 and histidine 165 each contribute to the beta-D-fructose 1,6-bisphosphate site. Histidine 172 functions as the Proton acceptor in the catalytic mechanism. Tyrosine 217 carries the post-translational modification Phosphotyrosine. Threonine 226 is a substrate binding site.

It belongs to the LDH/MDH superfamily. LDH family. Homotetramer.

Its subcellular location is the cytoplasm. It carries out the reaction (S)-lactate + NAD(+) = pyruvate + NADH + H(+). It participates in fermentation; pyruvate fermentation to lactate; (S)-lactate from pyruvate: step 1/1. Allosterically activated by fructose 1,6-bisphosphate (FBP). Catalyzes the conversion of lactate to pyruvate. In Thermotoga sp. (strain RQ2), this protein is L-lactate dehydrogenase.